The sequence spans 1229 residues: DNA-directed RNA polymerase subunit beta (1229 aa).

Positions 1175 to 1229 are disordered; it reads ESIDEDEQPQGLGAFERGLEEVENGEEDDDKEKFYEDLMDASQEQDESADDDIDE. Acidic residues-rich tracts occupy residues 1195-1204 and 1211-1229; these read EVENGEEDDD and DLMD…DIDE.

It belongs to the RNA polymerase beta chain family. As to quaternary structure, the RNAP catalytic core consists of 2 alpha, 1 beta, 1 beta' and 1 omega subunit. When a sigma factor is associated with the core the holoenzyme is formed, which can initiate transcription.

It carries out the reaction RNA(n) + a ribonucleoside 5'-triphosphate = RNA(n+1) + diphosphate. In terms of biological role, DNA-dependent RNA polymerase catalyzes the transcription of DNA into RNA using the four ribonucleoside triphosphates as substrates. This chain is DNA-directed RNA polymerase subunit beta, found in Caldicellulosiruptor saccharolyticus (strain ATCC 43494 / DSM 8903 / Tp8T 6331).